We begin with the raw amino-acid sequence, 628 residues long: MYSILRRAAPLRRRAVSALAAAVLRREEAAAEVVVSRRATIPAAWFHSSPAWLGFRETGAAGAAARPQYAADEGLFYEEDKRGAKAGGVAAGGAEEGLEVAKLGISPKIVSQLASRGITKLFPIQRAVLEPAMQGKDMVGRAKTGTGKTLAFGIPILDAIIRHNEKNSPGKFPLAIVLAPTRELAKQVEREFSDSSNVETICVYGGTPISQQIRQLNYGVDVVIGTPGRVIDLLKRGALNLSEVRFVVLDEADQMLSVGFDEDVETILDRVPPKRQTLMFSATMPTWIQRLTQKYLKNPVTIDLVGEDDQKLAEGISLYSIASEGHAKPAVLGELIKEHAKGGKCIVFTQTKRDADRLSYTMGRSFQCQALHGDITQAQRERTLKGFREGHFNILIATDVAARGLDIPNVDLVIHFELPNSSELFVHRSGRTGRAGKKGKAIVMHSYQQSRAIRMVENDVGCKFTELPKINVEGSDLMSGGFDSFGGGGFGREGGGSYGRRGSFGSSSSRGGGFGDSGFGRSGGGFGRSGGGGFGRSSGGGFGDSGFGRSGGGGFGDSGFGRSGGGGYGDSGFGSSGGGSGRSGFGRSGGFGDSGSGRFGGGFGNSGSGSFGNFGGNNSGQSGGFGSS.

Positions 98 to 126 (LEVAKLGISPKIVSQLASRGITKLFPIQR) match the Q motif motif. The region spanning 129–302 (LEPAMQGKDM…QKYLKNPVTI (174 aa)) is the Helicase ATP-binding domain. Residue 142-149 (AKTGTGKT) coordinates ATP. The DEAD box signature appears at 250-253 (DEAD). The Helicase C-terminal domain occupies 331–478 (VLGELIKEHA…KINVEGSDLM (148 aa)). 2 disordered regions span residues 496–548 (GSYG…SGFG) and 571–628 (SGFG…FGSS). Positions 500 to 509 (RRGSFGSSSS) are enriched in low complexity. A compositionally biased stretch (gly residues) spans 510–548 (RGGGFGDSGFGRSGGGFGRSGGGGFGRSSGGGFGDSGFG).

This sequence belongs to the DEAD box helicase family. DDX21/DDX50 subfamily.

The enzyme catalyses ATP + H2O = ADP + phosphate + H(+). The chain is DEAD-box ATP-dependent RNA helicase 9 from Oryza sativa subsp. japonica (Rice).